A 129-amino-acid chain; its full sequence is Replication initiation control protein YabA (129 aa).

Histidine 103, cysteine 105, cysteine 119, and cysteine 122 together coordinate Zn(2+).

Belongs to the YabA family. As to quaternary structure, homotetramer. Interacts with both DnaA and DnaN, acting as a bridge between these two proteins. Zn(2+) is required as a cofactor.

Its subcellular location is the cytoplasm. The protein resides in the nucleoid. Its function is as follows. Involved in control of chromosome replication initiation. Inhibits the cooperative binding of DnaA to the oriC region, thus negatively regulating initiation of chromosome replication. Inhibits the ability of DnaA-ATP to form a helix on DNA; does not disassemble preformed DnaA-DNA helices. Decreases the residence time of DnaA on the chromosome at its binding sites (oriC, replication forks and promoter-binding sites). Tethers DnaA to the replication machinery via the DNA polymerase beta sliding clamp subunit (dnaN). Associates with oriC and other DnaA targets on the chromosome in a DnaA-dependent manner. This is Replication initiation control protein YabA from Listeria monocytogenes serotype 4b (strain CLIP80459).